A 275-amino-acid chain; its full sequence is MAKGPVSTSSDDELPFETQEPIAADERSFFGGQPQKPSAPNARAALPASLAGQEHYHGHRERLRDRFREQGDAALADYEILELLLFRLIPRRDTKPIAKALIERFGSLAGVFGAPQALLMEVKGVGEAVALDLKLISTVAHRTLKSELRTKQVLSSWSSVIQYCHAAMAHETREQFRILFLDKRNVLIADEVQGRGTVDHTPVYPREVVKRALELSATAMVLVHNHPSGDPTPSRADIDMTKVIIDAAKALDITVHDHIIIGKDGHVSLKGLKLI.

Residues 1 to 45 are disordered; sequence MAKGPVSTSSDDELPFETQEPIAADERSFFGGQPQKPSAPNARAA. The region spanning 153 to 275 is the MPN domain; that stretch reads VLSSWSSVIQ…HVSLKGLKLI (123 aa). Residues histidine 224, histidine 226, and aspartate 237 each coordinate Zn(2+). The short motif at 224-237 is the JAMM motif element; it reads HNHPSGDPTPSRAD.

Belongs to the UPF0758 family.

The sequence is that of UPF0758 protein RL2068 from Rhizobium johnstonii (strain DSM 114642 / LMG 32736 / 3841) (Rhizobium leguminosarum bv. viciae).